Reading from the N-terminus, the 198-residue chain is Snake venom metalloproteinase BpirMP (198 aa).

Positions T1–P197 constitute a Peptidase M12B domain. Ca(2+) contacts are provided by E4 and D88. 3 cysteine pairs are disulfide-bonded: C112–C192, C152–C176, and C154–C159. H137 is a binding site for Zn(2+). E138 is an active-site residue. Positions 141 and 147 each coordinate Zn(2+). Positions 192 and 195 each coordinate Ca(2+).

Belongs to the venom metalloproteinase (M12B) family. P-I subfamily. As to quaternary structure, monomer. Zn(2+) serves as cofactor. As to expression, expressed by the venom gland.

The protein localises to the secreted. Its activity is regulated as follows. Inhibited by the chelating agents EDTA, EGTA and 1,10-phenanthroline. Is not inhibited by serine proteinase inhibitors aprotinin, leupeptin and benzamidine. Zinc metalloprotease that preferentially degrades Aalpha chain of fibrinogen (FGA) (at a dose of 5 ug, whereas at a dose of 10 ug, both FGA and FGB are completely degraded). Degrades fibrin gel in a dose-dependent manner, as well blood clots formed in vitro (thrombolytic activity). Induces hemorrhage (in the dorsal skin of mice), with an MHD of 50 ug. The basal membrane components collagen (all chains of type IV) (COL4A4), fibronectin (FN1), laminin and nidogen are all degraded by this toxin. This Bothrops pirajai (Piraja's lancehead) protein is Snake venom metalloproteinase BpirMP.